The chain runs to 212 residues: Peptide methionine sulfoxide reductase MsrA (212 aa).

Cys52 is an active-site residue.

This sequence belongs to the MsrA Met sulfoxide reductase family.

It carries out the reaction L-methionyl-[protein] + [thioredoxin]-disulfide + H2O = L-methionyl-(S)-S-oxide-[protein] + [thioredoxin]-dithiol. It catalyses the reaction [thioredoxin]-disulfide + L-methionine + H2O = L-methionine (S)-S-oxide + [thioredoxin]-dithiol. In terms of biological role, has an important function as a repair enzyme for proteins that have been inactivated by oxidation. Catalyzes the reversible oxidation-reduction of methionine sulfoxide in proteins to methionine. This chain is Peptide methionine sulfoxide reductase MsrA, found in Escherichia coli O17:K52:H18 (strain UMN026 / ExPEC).